Here is a 663-residue protein sequence, read N- to C-terminus: Cytochrome bo(3) ubiquinol oxidase subunit 1 (663 aa).

Residues 1–16 (MFGKLSLDAVPFHEPI) lie on the Periplasmic side of the membrane. A helical transmembrane segment spans residues 17–35 (VMVTIAGIILGGLALVGLI). At 36 to 52 (TYFGKWTYLWKEWLTSV) the chain is on the cytoplasmic side. The chain crosses the membrane as a helical span at residues 53-80 (DHKRLGIMYIIVAIVMLLRGFADAIMMR). Ubiquinone-8 is bound by residues Arg-71 and Asp-75. Over 81-95 (SQQALASAGEAGFLP) the chain is Periplasmic. Residues 96 to 132 (PHHYDQIFTAHGVIMIFFVAMPFVIGLMNLVVPLQIG) traverse the membrane as a helical segment. A ubiquinone-8-binding site is contributed by His-98. Residue His-106 coordinates heme b. Residues 133–137 (ARDVA) lie on the Cytoplasmic side of the membrane. The chain crosses the membrane as a helical span at residues 138 to 161 (FPFLNNLSFWFTVVGVILVNVSLG). The Periplasmic segment spans residues 162–184 (VGEFAQTGWLAYPPLSGIEYSPG). Position 170 (Trp-170) interacts with heme b. Residues 185-215 (VGVDYWIWSLQLSGIGTTLTGINFFVTILKM) form a helical membrane-spanning segment. Topologically, residues 216–224 (RAPGMTMFK) are cytoplasmic. A helical transmembrane segment spans residues 225–260 (MPVFTWASLCANVLIIASFPILTVTVALLTLDRYLG). The Periplasmic segment spans residues 261-270 (THFFTNDMGG). The helical transmembrane segment at 271-307 (NMMMYINLIWAWGHPEVYILILPVFGVFSEIAATFSR) threads the bilayer. His-284 is a binding site for Cu(2+). A cross-link (1'-histidyl-3'-tyrosine (His-Tyr)) is located at residues 284–288 (HPEVY). Residue Tyr-288 participates in Fe(II)-heme o binding. At 308 to 311 (KRLF) the chain is on the cytoplasmic side. A helical membrane pass occupies residues 312 to 326 (GYTSLVWATVCITVL). The Periplasmic portion of the chain corresponds to 327–340 (SFIVWLHHFFTMGA). Cu(2+)-binding residues include His-333 and His-334. A helical membrane pass occupies residues 341–369 (GANVNAFFGITTMIIAIPTGVKIFNWLFT). At 370–377 (MYQGRIVF) the chain is on the cytoplasmic side. The helical transmembrane segment at 378-409 (HSAMLWTIGFIVTFSVGGMTGVLLAVPGADFV) threads the bilayer. Topologically, residues 410–412 (LHN) are periplasmic. Residues His-411 and His-419 each coordinate Fe(II)-heme o. The chain crosses the membrane as a helical span at residues 413-445 (SLFLIAHFHNVIIGGVVFGCFAGMTYWWPKAFG). His-421 serves as a coordination point for heme b. Topologically, residues 446 to 448 (FKL) are cytoplasmic. A helical membrane pass occupies residues 449-477 (NETWGKRAFWFWIIGFFVAFMPLYALGFM). At 478-489 (GMTRRLSQQIDP) the chain is on the periplasmic side. Residues Arg-481 and Arg-482 each coordinate heme b. The helical transmembrane segment at 490-521 (QFHTMLMIAASGAVLIALGILCLVIQMYVSIR) threads the bilayer. At 522-587 (DRDQNRDLTG…DHYEEIHMPK (66 aa)) the chain is on the cytoplasmic side. A helical membrane pass occupies residues 588–606 (NSGAGIVIAAFSTIFGFAM). At 607 to 613 (IWHIWWL) the chain is on the periplasmic side. A helical membrane pass occupies residues 614–632 (AIVGFAGMIITWIVKSFDE). Over 633–663 (DVDYYVPVAEIEKLENQHFDEITKAGLKNGN) the chain is Cytoplasmic.

The protein belongs to the heme-copper respiratory oxidase family. As to quaternary structure, the cytochrome bo(3) ubiquinol oxidase complex is a heterooctamer of two A chains, two B chains, two C chains and two D chains. Requires Cu(2+) as cofactor. Heme b is required as a cofactor. Fe(II)-heme o serves as cofactor.

Its subcellular location is the cell inner membrane. It carries out the reaction 2 a ubiquinol + O2 + n H(+)(in) = 2 a ubiquinone + 2 H2O + n H(+)(out). Its function is as follows. Cytochrome bo(3) ubiquinol oxidase is the terminal enzyme in the aerobic respiratory chain of E.coli that predominates when cells are grown at high aeration. Catalyzes the four-electron reduction of O2 to water, using a ubiquinol as a membrane soluble electron donor for molecular oxygen reduction; ubiquinol-8 is the natural substrate for E.coli. Has proton pump activity across the membrane in addition to electron transfer, pumping 2 protons/electron and generating a proton motive force. All the redox centers of this enzyme complex are located within the largest subunit, subunit I. Protons are probably pumped via D- and K- channels found in this subunit. The chain is Cytochrome bo(3) ubiquinol oxidase subunit 1 (cyoB) from Escherichia coli O157:H7.